Here is a 530-residue protein sequence, read N- to C-terminus: UDP-glucuronosyltransferase 2B17 (530 aa).

Positions 1 to 23 (MPGKWISALLLLQISCCFRSVKC) are cleaved as a signal peptide. 2 N-linked (GlcNAc...) asparagine glycosylation sites follow: asparagine 316 and asparagine 483. The helical transmembrane segment at 494–510 (VIGFLLSCVATTIVLSV) threads the bilayer.

Belongs to the UDP-glycosyltransferase family.

It localises to the endoplasmic reticulum membrane. The enzyme catalyses glucuronate acceptor + UDP-alpha-D-glucuronate = acceptor beta-D-glucuronoside + UDP + H(+). It catalyses the reaction 17alpha-estradiol + UDP-alpha-D-glucuronate = 17alpha-estradiol 3-O-(beta-D-glucuronate) + UDP + H(+). The catalysed reaction is 17alpha-estradiol + UDP-alpha-D-glucuronate = 17alpha-estradiol 17-O-(beta-D-glucuronate) + UDP + H(+). It carries out the reaction 17beta-estradiol + UDP-alpha-D-glucuronate = 17beta-estradiol 17-O-(beta-D-glucuronate) + UDP + H(+). The enzyme catalyses 17beta-hydroxy-5alpha-androstan-3-one + UDP-alpha-D-glucuronate = 5alpha-dihydrotestosterone 17-O-(beta-D-glucuronate) + UDP + H(+). It catalyses the reaction testosterone + UDP-alpha-D-glucuronate = testosterone 17-O-(beta-D-glucuronate) + UDP + H(+). UDP-glucuronosyltransferase (UGT) that catalyzes phase II biotransformation reactions in which lipophilic substrates are conjugated with glucuronic acid to increase the metabolite's water solubility, thereby facilitating excretion into either the urine or bile. Catalyzes the glucuronidation of endogenous steroid hormones such as androgens (epitestosterone, androsterone) and estrogens (estradiol, epiestradiol). The protein is UDP-glucuronosyltransferase 2B17 of Mus musculus (Mouse).